Reading from the N-terminus, the 147-residue chain is Small ribosomal subunit protein bS6 (147 aa).

The segment covering 97–141 has biased composition (basic and acidic residues); it reads EEGPSAMMRKADRDRERDDRGGGFRGDREGGFRGDRGPRRPREEA. The interval 97 to 147 is disordered; it reads EEGPSAMMRKADRDRERDDRGGGFRGDREGGFRGDRGPRRPREEAPAVVEE.

It belongs to the bacterial ribosomal protein bS6 family.

Its function is as follows. Binds together with bS18 to 16S ribosomal RNA. The polypeptide is Small ribosomal subunit protein bS6 (Nitrobacter hamburgensis (strain DSM 10229 / NCIMB 13809 / X14)).